The following is a 424-amino-acid chain: Putative ankyrin repeat protein R858 (424 aa).

ANK repeat units lie at residues 115 to 144 (HLMCACIYSINDSNLELVKLLVNNFNFTKR), 147 to 177 (TDHTALSYAFKNPGNIKIIGFLLNYIESDYF), 184 to 215 (INDSLIYWSKTDYLPCIEMAKLLIKAEASINY), and 219 to 252 (TGSTILINIINNKNYYNITDLVKFLLTEGVDIHE).

In Acanthamoeba polyphaga (Amoeba), this protein is Putative ankyrin repeat protein R858.